Consider the following 856-residue polypeptide: Translation initiation factor IF-2 (856 aa).

Residues Pro356–Lys526 form the tr-type G domain. A G1 region spans residues Gly365–Thr372. Gly365–Thr372 provides a ligand contact to GTP. A G2 region spans residues Gly390 to His394. The G3 stretch occupies residues Asp412 to Gly415. GTP contacts are provided by residues Asp412–His416 and Asn466–Asp469. The segment at Asn466–Asp469 is G4. The tract at residues Ser502 to Lys504 is G5.

It belongs to the TRAFAC class translation factor GTPase superfamily. Classic translation factor GTPase family. IF-2 subfamily.

The protein resides in the cytoplasm. One of the essential components for the initiation of protein synthesis. Protects formylmethionyl-tRNA from spontaneous hydrolysis and promotes its binding to the 30S ribosomal subunits. Also involved in the hydrolysis of GTP during the formation of the 70S ribosomal complex. The polypeptide is Translation initiation factor IF-2 (Ehrlichia ruminantium (strain Welgevonden)).